The sequence spans 74 residues: Conotoxin TsMLCL-04 (74 aa).

The N-terminal stretch at 1–19 (MLCLPVFIILLLLASPAAP) is a signal peptide. The propeptide occupies 20–60 (NPLETRIQRDLIRAALEDADMKTNERFLEGVISTIKDFAGK).

The protein belongs to the conotoxin T superfamily. Post-translationally, contains 2 disulfide bonds that can be either 'C1-C3, C2-C4' or 'C1-C4, C2-C3', since these disulfide connectivities have been observed for conotoxins with cysteine framework V (for examples, see AC P0DQQ7 and AC P81755). Expressed by the venom duct.

Its subcellular location is the secreted. This is Conotoxin TsMLCL-04 from Conus tessulatus (Tessellate cone).